The sequence spans 239 residues: RNA chaperone ProQ (239 aa).

Residues 107 to 177 are disordered; the sequence is KARVQAQRAE…RKPVAKPVQA (71 aa). Basic and acidic residues predominate over residues 115-137; that stretch reads AEQRAKKREAENVAAGEKNERPT.

This sequence belongs to the ProQ family.

It is found in the cytoplasm. In terms of biological role, RNA chaperone with significant RNA binding, RNA strand exchange and RNA duplexing activities. May regulate ProP activity through an RNA-based, post-transcriptional mechanism. The polypeptide is RNA chaperone ProQ (Photorhabdus laumondii subsp. laumondii (strain DSM 15139 / CIP 105565 / TT01) (Photorhabdus luminescens subsp. laumondii)).